We begin with the raw amino-acid sequence, 295 residues long: Probable protein phosphatase 2C 54 (295 aa).

Residues 78-289 (GHGVVSVMGR…ENINVIVIDL (212 aa)) enclose the PPM-type phosphatase domain. Residues D112, G113, D228, and E280 each coordinate Mn(2+).

This sequence belongs to the PP2C family. Mg(2+) is required as a cofactor. It depends on Mn(2+) as a cofactor.

It carries out the reaction O-phospho-L-seryl-[protein] + H2O = L-seryl-[protein] + phosphate. The catalysed reaction is O-phospho-L-threonyl-[protein] + H2O = L-threonyl-[protein] + phosphate. This is Probable protein phosphatase 2C 54 from Arabidopsis thaliana (Mouse-ear cress).